A 223-amino-acid chain; its full sequence is Proteasome subunit beta (223 aa).

Residues 1 to 6 (MDTMKG) constitute a propeptide, removed in mature form; by autocatalysis. The active-site Nucleophile is Thr7.

It belongs to the peptidase T1B family. As to quaternary structure, the 20S proteasome core is composed of 14 alpha and 14 beta subunits that assemble into four stacked heptameric rings, resulting in a barrel-shaped structure. The two inner rings, each composed of seven catalytic beta subunits, are sandwiched by two outer rings, each composed of seven alpha subunits. The catalytic chamber with the active sites is on the inside of the barrel. Has a gated structure, the ends of the cylinder being occluded by the N-termini of the alpha-subunits. Is capped at one or both ends by the proteasome regulatory ATPase, PAN.

The protein localises to the cytoplasm. The enzyme catalyses Cleavage of peptide bonds with very broad specificity.. The formation of the proteasomal ATPase PAN-20S proteasome complex, via the docking of the C-termini of PAN into the intersubunit pockets in the alpha-rings, triggers opening of the gate for substrate entry. Interconversion between the open-gate and close-gate conformations leads to a dynamic regulation of the 20S proteasome proteolysis activity. Functionally, component of the proteasome core, a large protease complex with broad specificity involved in protein degradation. The polypeptide is Proteasome subunit beta (Methanocaldococcus vulcanius (strain ATCC 700851 / DSM 12094 / M7) (Methanococcus vulcanius)).